The sequence spans 985 residues: Regulator of telomere elongation helicase 1 homolog (985 aa).

The Helicase ATP-binding domain maps to 7-303; sequence AGIPVHFPFE…QDMGGDEPKD (297 aa). Position 42–49 (42–49) interacts with ATP; the sequence is SPTGTGKT. Positions 146, 164, 173, and 209 each coordinate [4Fe-4S] cluster. The DEAH box signature appears at 252 to 255; sequence DEAH. The segment at 858-884 is disordered; sequence GSSGMVKIHKRERSSPTQPESSSQVSK. Positions 872–882 are enriched in polar residues; the sequence is SPTQPESSSQV. Thr-874 is subject to Phosphothreonine.

It belongs to the helicase family. RAD3/XPD subfamily.

Its subcellular location is the nucleus. The enzyme catalyses ATP + H2O = ADP + phosphate + H(+). In terms of biological role, a probable ATP-dependent DNA helicase implicated in DNA repair and the maintenance of genomic stability. Acts as an anti-recombinase to counteract toxic recombination and limit crossover during meiosis. Regulates meiotic recombination and crossover homeostasis by physically dissociating strand invasion events and thereby promotes noncrossover repair by meiotic synthesis dependent strand annealing (SDSA) as well as disassembly of D loop recombination intermediates. The sequence is that of Regulator of telomere elongation helicase 1 homolog from Drosophila yakuba (Fruit fly).